Here is a 104-residue protein sequence, read N- to C-terminus: Small ribosomal subunit protein uS10 (104 aa).

Belongs to the universal ribosomal protein uS10 family. Part of the 30S ribosomal subunit.

Functionally, involved in the binding of tRNA to the ribosomes. The polypeptide is Small ribosomal subunit protein uS10 (Alkaliphilus oremlandii (strain OhILAs) (Clostridium oremlandii (strain OhILAs))).